The sequence spans 122 residues: Cytochrome b-c1 complex subunit 7-2, mitochondrial (122 aa).

Belongs to the UQCRB/QCR7 family. Component of the ubiquinol-cytochrome c oxidoreductase (cytochrome b-c1 complex, complex III, CIII), a multisubunit enzyme composed of 10 subunits. The complex is composed of 3 respiratory subunits cytochrome b (MT-CYB), cytochrome c1 (CYC1-1 or CYC1-2) and Rieske protein (UCR1-1 or UCR1-2), 2 core protein subunits MPPalpha1 (or MPPalpha2) and MPPB, and 5 low-molecular weight protein subunits QCR7-1 (or QCR7-2), UCRQ-1 (or UCRQ-2), QCR9, UCRY and probably QCR6-1 (or QCR6-2). The complex exists as an obligatory dimer and forms supercomplexes (SCs) in the inner mitochondrial membrane with NADH-ubiquinone oxidoreductase (complex I, CI), resulting in different assemblies (supercomplexes SCI(1)III(2) and SCI(2)III(4)).

The protein localises to the mitochondrion inner membrane. Functionally, component of the ubiquinol-cytochrome c oxidoreductase, a multisubunit transmembrane complex that is part of the mitochondrial electron transport chain which drives oxidative phosphorylation. The respiratory chain contains 3 multisubunit complexes succinate dehydrogenase (complex II, CII), ubiquinol-cytochrome c oxidoreductase (cytochrome b-c1 complex, complex III, CIII) and cytochrome c oxidase (complex IV, CIV), that cooperate to transfer electrons derived from NADH and succinate to molecular oxygen, creating an electrochemical gradient over the inner membrane that drives transmembrane transport and the ATP synthase. The cytochrome b-c1 complex catalyzes electron transfer from ubiquinol to cytochrome c, linking this redox reaction to translocation of protons across the mitochondrial inner membrane, with protons being carried across the membrane as hydrogens on the quinol. In the process called Q cycle, 2 protons are consumed from the matrix, 4 protons are released into the intermembrane space and 2 electrons are passed to cytochrome c. The sequence is that of Cytochrome b-c1 complex subunit 7-2, mitochondrial (QCR7-2) from Arabidopsis thaliana (Mouse-ear cress).